Consider the following 193-residue polypeptide: MGAAGDAAIGRESRELMSAADVGRTISRIAHQIIEKTALDDPVGPDAPRVVLLGIPTRGVTLANRLAGNITEYSGIHVGHGALDITLYRDDLMIKPPRPLASTSIPAGGIDDALVILVDDVLYSGRSVRSALDALRDVGRPRAVQLAVLVDRGHRELPLRADYVGKNVPTSRSESVHVRLREHDGRDGVVISR.

Substrate-binding positions include 57–58, arginine 98, 119–127, arginine 152, and valine 176; these read TR and DDVLYSGRS. Residues 115 to 127 carry the PRPP-binding motif; it reads VILVDDVLYSGRS.

The protein belongs to the purine/pyrimidine phosphoribosyltransferase family. PyrR subfamily.

The enzyme catalyses UMP + diphosphate = 5-phospho-alpha-D-ribose 1-diphosphate + uracil. Regulates the transcription of the pyrimidine nucleotide (pyr) operon in response to exogenous pyrimidines. Functionally, also displays a weak uracil phosphoribosyltransferase activity which is not physiologically significant. This Mycobacterium bovis (strain ATCC BAA-935 / AF2122/97) protein is Bifunctional protein PyrR.